A 39-amino-acid polypeptide reads, in one-letter code: Contryphan-Cal3 (39 aa).

The N-terminal stretch at 1-20 is a signal peptide; sequence MTRTAVLLLTLLFLVAMAAS. An intrachain disulfide couples Cys-29 to Cys-35.

As to expression, expressed by the venom duct.

Its subcellular location is the secreted. Its function is as follows. Probable neurotoxin. This Californiconus californicus (California cone) protein is Contryphan-Cal3.